We begin with the raw amino-acid sequence, 65 residues long: Vespid chemotactic peptide 5h (65 aa).

Residues Met1–Ala23 form the signal peptide. AXPX repeat units lie at residues Ala23–Ala26, Ala27–Leu30, Ala31–Gly34, Ala35–Asp38, Ala39–Asn42, Ala43–Leu46, and Ala47–Phe50. The propeptide occupies Ala24–Pro49. Leu62 carries the leucine amide modification.

The protein belongs to the MCD family. Crabrolin subfamily. As to expression, expressed by the venom gland.

Its subcellular location is the secreted. Its function is as follows. Shows antimicrobial activity against the Gram-negative bacteria E.coli ATCC 25922 (MIC=30 ug/ml), the Gram-positive bacteria S.aureus ATCC 2592 (MIC=5 ug/ml) and the fungus C.albicans ATCC 2002 (MIC=25 ug/ml). Acts as a mast cell degranulating peptide. Its mast cell degranulation activity may be related to the activation of G-protein coupled receptors in mast cells as well as interaction with other proteins located in cell endosomal membranes in the mast cells. Induces the chemotaxis of neutrophils. This chain is Vespid chemotactic peptide 5h, found in Vespa magnifica (Hornet).